Here is a 173-residue protein sequence, read N- to C-terminus: Coordinator of PRMT5 and differentiation stimulator (173 aa).

An N-acetylmethionine modification is found at Met-1. Residues 1-70 form a disordered region; sequence MDPQAATGRG…EGPSSEEEGF (70 aa). 2 positions are modified to phosphoserine: Ser-64 and Ser-65.

As to quaternary structure, interacts with PRMT5. Interacts with histone H4; specifically interacts with the N-terminus of histone H4 but not with histone H3. Interacts with CBFB. Found in a complex with PRMT5, RUNX1 and CBFB.

It is found in the nucleus. Histone-binding protein required for histone H4 methyltransferase activity of PRMT5. Specifically required for histone H4 'Arg-3' methylation mediated by PRMT5, but not histone H3 'Arg-8' methylation, suggesting that it modulates the substrate specificity of PRMT5. Specifically interacts with the N-terminus of histone H4 but not with histone H3, suggesting that it acts by promoting the association between histone H4 and PRMT5. Involved in CCNE1 promoter repression. Plays a role in muscle cell differentiation by modulating the recruitment of PRMT5 to the promoter of genes involved in the coordination between cell cycle exit and muscle differentiation. The sequence is that of Coordinator of PRMT5 and differentiation stimulator (Coprs) from Mus musculus (Mouse).